The sequence spans 471 residues: MFAFYFLTACISLKGVFGVSPSYNGLGLTPQMGWDNWNTFACDVSEQLLLDTADRISDLGLKDMGYKYIILDDCWSSGRDSDGFLVADEQKFPNGMGHVADHLHNNSFLFGMYSSAGEYTCAGYPGSLGREEEDAQFFANNRVDYLKYDNCYNKGQFGTPEISYHRYKAMSDALNKTGRPIFYSLCNWGQDLTFYWGSGIANSWRMSGDVTAEFTRPDSRCPCDGDEYDCKYAGFHCSIMNILNKAAPMGQNAGVGGWNDLDNLEVGVGNLTDDEEKAHFSMWAMVKSPLIIGANVNNLKASSYSIYSQASVIAINQDSNGIPATRVWRYYVSDTDEYGQGEIQMWSGPLDNGDQVVALLNGGSVSRPMNTTLEEIFFDSNLGSKKLTSTWDIYDLWANRVDNSTASAILGRNKTATGILYNATEQSYKDGLSKNDTRLFGQKIGSLSPNAILNTTVPAHGIAFYRLRPSS.

Residues Met-1 to Gly-18 form the signal peptide. Cys-42 and Cys-74 are oxidised to a cystine. Substrate is bound by residues Asp-72 and Asp-73. N-linked (GlcNAc...) asparagine glycosylation is present at Asn-105. Cys-121 and Cys-151 are oxidised to a cystine. Lys-147 contributes to the substrate binding site. Asp-149 functions as the Nucleophile in the catalytic mechanism. An N-linked (GlcNAc...) asparagine glycan is attached at Asn-175. Arg-205 serves as a coordination point for substrate. Asp-209 acts as the Proton donor in catalysis. 2 disulfides stabilise this stretch: Cys-221–Cys-237 and Cys-223–Cys-230. Gln-251 provides a ligand contact to substrate. 7 N-linked (GlcNAc...) asparagine glycosylation sites follow: Asn-270, Asn-370, Asn-403, Asn-413, Asn-422, Asn-435, and Asn-454.

It belongs to the glycosyl hydrolase 27 family. In terms of assembly, homotetramer.

It localises to the secreted. It carries out the reaction Hydrolysis of terminal, non-reducing alpha-D-galactose residues in alpha-D-galactosides, including galactose oligosaccharides, galactomannans and galactolipids.. The polypeptide is Alpha-galactosidase 1 (MEL1) (Saccharomyces cerevisiae (Baker's yeast)).